Reading from the N-terminus, the 37-residue chain is Large ribosomal subunit protein bL36c (37 aa).

It belongs to the bacterial ribosomal protein bL36 family.

The protein resides in the plastid. Its subcellular location is the chloroplast. This is Large ribosomal subunit protein bL36c from Lepidium virginicum (Virginia pepperweed).